Here is a 218-residue protein sequence, read N- to C-terminus: Pyridoxine/pyridoxamine 5'-phosphate oxidase (218 aa).

Residues 14 to 17 and Lys-72 each bind substrate; that span reads RREY. Residues 67–72, 82–83, Arg-88, Lys-89, and Gln-111 each bind FMN; these read RIVLLK and YT. Substrate is bound by residues Tyr-129, Arg-133, and Ser-137. Residues 146-147 and Trp-191 each bind FMN; that span reads QS. Substrate is bound at residue 197 to 199; that stretch reads RLH. Arg-201 contacts FMN.

Belongs to the pyridoxamine 5'-phosphate oxidase family. In terms of assembly, homodimer. FMN is required as a cofactor.

It carries out the reaction pyridoxamine 5'-phosphate + O2 + H2O = pyridoxal 5'-phosphate + H2O2 + NH4(+). It catalyses the reaction pyridoxine 5'-phosphate + O2 = pyridoxal 5'-phosphate + H2O2. It participates in cofactor metabolism; pyridoxal 5'-phosphate salvage; pyridoxal 5'-phosphate from pyridoxamine 5'-phosphate: step 1/1. It functions in the pathway cofactor metabolism; pyridoxal 5'-phosphate salvage; pyridoxal 5'-phosphate from pyridoxine 5'-phosphate: step 1/1. In terms of biological role, catalyzes the oxidation of either pyridoxine 5'-phosphate (PNP) or pyridoxamine 5'-phosphate (PMP) into pyridoxal 5'-phosphate (PLP). This Escherichia coli O139:H28 (strain E24377A / ETEC) protein is Pyridoxine/pyridoxamine 5'-phosphate oxidase.